The sequence spans 204 residues: High frequency lysogenization protein HflD homolog (204 aa).

The protein belongs to the HflD family.

Its subcellular location is the cytoplasm. The protein resides in the cell inner membrane. The protein is High frequency lysogenization protein HflD homolog of Xanthomonas axonopodis pv. citri (strain 306).